The primary structure comprises 202 residues: Small ribosomal subunit protein uS4 (202 aa).

Residues 21-42 (LSRKSPRRAYPPGQHGQARRKR) form a disordered region. The S4 RNA-binding domain maps to 90–152 (MRLDNTVFRL…DRSRKLVETN (63 aa)).

It belongs to the universal ribosomal protein uS4 family. As to quaternary structure, part of the 30S ribosomal subunit. Contacts protein S5. The interaction surface between S4 and S5 is involved in control of translational fidelity.

Functionally, one of the primary rRNA binding proteins, it binds directly to 16S rRNA where it nucleates assembly of the body of the 30S subunit. Its function is as follows. With S5 and S12 plays an important role in translational accuracy. The polypeptide is Small ribosomal subunit protein uS4 (Synechocystis sp. (strain ATCC 27184 / PCC 6803 / Kazusa)).